The chain runs to 138 residues: Translation initiation factor 2 subunit beta (138 aa).

It belongs to the eIF-2-beta/eIF-5 family. Heterotrimer composed of an alpha, a beta and a gamma chain.

In terms of biological role, eIF-2 functions in the early steps of protein synthesis by forming a ternary complex with GTP and initiator tRNA. The polypeptide is Translation initiation factor 2 subunit beta (Methanococcus maripaludis (strain C6 / ATCC BAA-1332)).